We begin with the raw amino-acid sequence, 207 residues long: uncharacterized protein (207 aa).

This sequence to M.leprae ML1660.

This is an uncharacterized protein from Mycobacterium tuberculosis (strain CDC 1551 / Oshkosh).